Consider the following 350-residue polypeptide: Biotin synthase (350 aa).

One can recognise a Radical SAM core domain in the interval 38–262 (RQVQVSTLLS…MMPTSYVRLS (225 aa)). Cys53, Cys57, and Cys60 together coordinate [4Fe-4S] cluster. [2Fe-2S] cluster contacts are provided by Cys97, Cys128, Cys188, and Arg260.

It belongs to the radical SAM superfamily. Biotin synthase family. Homodimer. [4Fe-4S] cluster serves as cofactor. The cofactor is [2Fe-2S] cluster.

The enzyme catalyses (4R,5S)-dethiobiotin + (sulfur carrier)-SH + 2 reduced [2Fe-2S]-[ferredoxin] + 2 S-adenosyl-L-methionine = (sulfur carrier)-H + biotin + 2 5'-deoxyadenosine + 2 L-methionine + 2 oxidized [2Fe-2S]-[ferredoxin]. It functions in the pathway cofactor biosynthesis; biotin biosynthesis; biotin from 7,8-diaminononanoate: step 2/2. Functionally, catalyzes the conversion of dethiobiotin (DTB) to biotin by the insertion of a sulfur atom into dethiobiotin via a radical-based mechanism. The sequence is that of Biotin synthase from Yersinia enterocolitica serotype O:8 / biotype 1B (strain NCTC 13174 / 8081).